Reading from the N-terminus, the 120-residue chain is Dynein 11 kDa light chain, flagellar outer arm (120 aa).

It belongs to the dynein light chain family. Consists of at least 3 heavy chains (alpha, beta and gamma), 2 intermediate chains and 8 light chains.

It is found in the cytoplasm. It localises to the cytoskeleton. Its subcellular location is the flagellum axoneme. This chain is Dynein 11 kDa light chain, flagellar outer arm, found in Chlamydomonas reinhardtii (Chlamydomonas smithii).